A 220-amino-acid polypeptide reads, in one-letter code: Adenylate kinase (220 aa).

12–17 contacts ATP; that stretch reads GAGKGT. Positions 32-62 are NMP; it reads STGDIFRDIVKKENDELGKKIKEIMEKGELV. Residues Thr33, Arg38, 60 to 62, 88 to 91, and Gln95 each bind AMP; these read ELV and GYPR. The segment at 129–166 is LID; the sequence is SRRICPKCGRIYNMISLPPKEDELCDDCKVKLVQRDDD. Arg130 is a binding site for ATP. Zn(2+) is bound by residues Cys133 and Cys136. 139-140 contacts ATP; that stretch reads IY. Residues Cys153 and Cys156 each coordinate Zn(2+). Arg163 and Arg174 together coordinate AMP. An ATP-binding site is contributed by Ile202.

This sequence belongs to the adenylate kinase family. Monomer.

The protein resides in the cytoplasm. The catalysed reaction is AMP + ATP = 2 ADP. The protein operates within purine metabolism; AMP biosynthesis via salvage pathway; AMP from ADP: step 1/1. Functionally, catalyzes the reversible transfer of the terminal phosphate group between ATP and AMP. Plays an important role in cellular energy homeostasis and in adenine nucleotide metabolism. The protein is Adenylate kinase of Thermotoga neapolitana.